An 87-amino-acid chain; its full sequence is uncharacterized protein (87 aa).

This is an uncharacterized protein from Bacillus phage phi105 (Bacteriophage phi-105).